A 728-amino-acid polypeptide reads, in one-letter code: Catalase-peroxidase (728 aa).

Positions 91–218 form a cross-link, tryptophyl-tyrosyl-methioninium (Trp-Tyr) (with M-244); sequence WHSAGTYRTA…LAAVQMGLIY (128 aa). Catalysis depends on His92, which acts as the Proton acceptor. The tryptophyl-tyrosyl-methioninium (Tyr-Met) (with W-91) cross-link spans 218–244; that stretch reads YVNPEGPDGTPDPVAAAHDIRETFARM. A heme b-binding site is contributed by His259.

It belongs to the peroxidase family. Peroxidase/catalase subfamily. In terms of assembly, homodimer or homotetramer. Requires heme b as cofactor. Post-translationally, formation of the three residue Trp-Tyr-Met cross-link is important for the catalase, but not the peroxidase activity of the enzyme.

The catalysed reaction is H2O2 + AH2 = A + 2 H2O. The enzyme catalyses 2 H2O2 = O2 + 2 H2O. Functionally, bifunctional enzyme with both catalase and broad-spectrum peroxidase activity. The sequence is that of Catalase-peroxidase from Burkholderia lata (strain ATCC 17760 / DSM 23089 / LMG 22485 / NCIMB 9086 / R18194 / 383).